A 345-amino-acid polypeptide reads, in one-letter code: Phosphoribosylformylglycinamidine cyclo-ligase (345 aa).

The protein belongs to the AIR synthase family.

The protein resides in the cytoplasm. It carries out the reaction 2-formamido-N(1)-(5-O-phospho-beta-D-ribosyl)acetamidine + ATP = 5-amino-1-(5-phospho-beta-D-ribosyl)imidazole + ADP + phosphate + H(+). It participates in purine metabolism; IMP biosynthesis via de novo pathway; 5-amino-1-(5-phospho-D-ribosyl)imidazole from N(2)-formyl-N(1)-(5-phospho-D-ribosyl)glycinamide: step 2/2. The polypeptide is Phosphoribosylformylglycinamidine cyclo-ligase (Shewanella sp. (strain ANA-3)).